The sequence spans 415 residues: Squalene synthase 1 (415 aa).

Transmembrane regions (helical) follow at residues 281 to 301 and 391 to 411; these read AIFR…ALCF and LIAI…SNLL.

The protein belongs to the phytoene/squalene synthase family. Requires Mg(2+) as cofactor. The cofactor is Mn(2+). In terms of tissue distribution, mostly expressed in the shoot apex (buds) and roots, and, to a lower extent, in stems, leaves, flowers and seeds.

It is found in the endoplasmic reticulum membrane. It catalyses the reaction 2 (2E,6E)-farnesyl diphosphate + NADH + H(+) = squalene + 2 diphosphate + NAD(+). The enzyme catalyses 2 (2E,6E)-farnesyl diphosphate + NADPH + H(+) = squalene + 2 diphosphate + NADP(+). It participates in terpene metabolism; lanosterol biosynthesis; lanosterol from farnesyl diphosphate: step 1/3. In terms of biological role, component of the triterpene saponins (e.g. ginsenosides or panaxosides) and phytosterols biosynthetic pathways. Catalyzes the biosynthesis of squalene. This chain is Squalene synthase 1, found in Panax ginseng (Korean ginseng).